We begin with the raw amino-acid sequence, 203 residues long: Peptidyl-tRNA hydrolase (203 aa).

Tyr18 contacts tRNA. The Proton acceptor role is filled by His23. The tRNA site is built by Phe69, Asn71, and Asn117.

This sequence belongs to the PTH family. In terms of assembly, monomer.

Its subcellular location is the cytoplasm. It carries out the reaction an N-acyl-L-alpha-aminoacyl-tRNA + H2O = an N-acyl-L-amino acid + a tRNA + H(+). Hydrolyzes ribosome-free peptidyl-tRNAs (with 1 or more amino acids incorporated), which drop off the ribosome during protein synthesis, or as a result of ribosome stalling. Its function is as follows. Catalyzes the release of premature peptidyl moieties from peptidyl-tRNA molecules trapped in stalled 50S ribosomal subunits, and thus maintains levels of free tRNAs and 50S ribosomes. The polypeptide is Peptidyl-tRNA hydrolase (Prochlorococcus marinus subsp. pastoris (strain CCMP1986 / NIES-2087 / MED4)).